We begin with the raw amino-acid sequence, 468 residues long: Chromatin assembly factor 1 subunit B (468 aa).

WD repeat units lie at residues 11–52 (HDSQ…NGQN), 69–108 (HHEQ…TQQE), 143–182 (TAAA…LVCG), 185–224 (DHGH…AGVV), and 371–413 (IHYS…SRIE).

Belongs to the WD repeat HIR1 family. As to quaternary structure, component of chromatin assembly factor 1 (CAF-1), composed of MSI1/p50, CAC2/p60 and CAC1/p90. Interacts with RTT106.

The protein localises to the nucleus. Its function is as follows. Acts as a component of the histone chaperone complex chromatin assembly factor 1 (CAF-1), which assembles histone octamers onto replicating DNA. It performs the first step of the nucleosome assembly process, bringing newly synthesized histones H3 and H4 to replicating DNA; histones H2A/H2B can bind to this chromatin precursor subsequent to DNA replication to complete the histone octamer. Plays a role in the maintenance of heterochromatin. The chain is Chromatin assembly factor 1 subunit B (CAC2) from Saccharomyces cerevisiae (strain ATCC 204508 / S288c) (Baker's yeast).